The chain runs to 180 residues: ATP synthase subunit delta (180 aa).

Belongs to the ATPase delta chain family. As to quaternary structure, F-type ATPases have 2 components, F(1) - the catalytic core - and F(0) - the membrane proton channel. F(1) has five subunits: alpha(3), beta(3), gamma(1), delta(1), epsilon(1). CF(0) has four main subunits: a(1), b(1), b'(1) and c(10-14). The alpha and beta chains form an alternating ring which encloses part of the gamma chain. F(1) is attached to F(0) by a central stalk formed by the gamma and epsilon chains, while a peripheral stalk is formed by the delta, b and b' chains.

It is found in the cellular thylakoid membrane. Its function is as follows. F(1)F(0) ATP synthase produces ATP from ADP in the presence of a proton or sodium gradient. F-type ATPases consist of two structural domains, F(1) containing the extramembraneous catalytic core and F(0) containing the membrane proton channel, linked together by a central stalk and a peripheral stalk. During catalysis, ATP synthesis in the catalytic domain of F(1) is coupled via a rotary mechanism of the central stalk subunits to proton translocation. In terms of biological role, this protein is part of the stalk that links CF(0) to CF(1). It either transmits conformational changes from CF(0) to CF(1) or is implicated in proton conduction. The sequence is that of ATP synthase subunit delta from Synechococcus elongatus (strain ATCC 33912 / PCC 7942 / FACHB-805) (Anacystis nidulans R2).